A 682-amino-acid chain; its full sequence is DNA-directed RNA polymerase subunit beta' (682 aa).

4 residues coordinate Zn(2+): Cys69, Cys71, Cys87, and Cys90. Mg(2+) is bound by residues Asp489, Asp491, and Asp493.

The protein belongs to the RNA polymerase beta' chain family. RpoC1 subfamily. As to quaternary structure, in plastids the minimal PEP RNA polymerase catalytic core is composed of four subunits: alpha, beta, beta', and beta''. When a (nuclear-encoded) sigma factor is associated with the core the holoenzyme is formed, which can initiate transcription. Mg(2+) serves as cofactor. The cofactor is Zn(2+).

The protein resides in the plastid. It is found in the chloroplast. The catalysed reaction is RNA(n) + a ribonucleoside 5'-triphosphate = RNA(n+1) + diphosphate. In terms of biological role, DNA-dependent RNA polymerase catalyzes the transcription of DNA into RNA using the four ribonucleoside triphosphates as substrates. In Brachypodium distachyon (Purple false brome), this protein is DNA-directed RNA polymerase subunit beta'.